The following is a 263-amino-acid chain: Endonuclease 8 (263 aa).

Pro-2 acts as the Schiff-base intermediate with DNA in catalysis. The active-site Proton donor is Glu-3. The active-site Proton donor; for beta-elimination activity is the Lys-53. Positions 70, 125, and 169 each coordinate DNA. The segment at 229–263 (KVFHRDGELCERCGGIIEKTTLSSRPFYWCPGCQH) adopts an FPG-type zinc-finger fold. Arg-253 serves as the catalytic Proton donor; for delta-elimination activity.

Belongs to the FPG family. Zn(2+) is required as a cofactor.

The enzyme catalyses 2'-deoxyribonucleotide-(2'-deoxyribose 5'-phosphate)-2'-deoxyribonucleotide-DNA = a 3'-end 2'-deoxyribonucleotide-(2,3-dehydro-2,3-deoxyribose 5'-phosphate)-DNA + a 5'-end 5'-phospho-2'-deoxyribonucleoside-DNA + H(+). In terms of biological role, involved in base excision repair of DNA damaged by oxidation or by mutagenic agents. Acts as a DNA glycosylase that recognizes and removes damaged bases. Has a preference for oxidized pyrimidines, such as thymine glycol, 5,6-dihydrouracil and 5,6-dihydrothymine. Has AP (apurinic/apyrimidinic) lyase activity and introduces nicks in the DNA strand. Cleaves the DNA backbone by beta-delta elimination to generate a single-strand break at the site of the removed base with both 3'- and 5'-phosphates. This Shigella boydii serotype 4 (strain Sb227) protein is Endonuclease 8.